The sequence spans 839 residues: Taste receptor type 1 member 2 (839 aa).

The N-terminal stretch at 1-19 (MGPRAKTICSLFFLLWVLA) is a signal peptide. Topologically, residues 20 to 566 (EPAENSDFYL…VFLEWHEAPT (547 aa)) are extracellular. 9 N-linked (GlcNAc...) asparagine glycosylation sites follow: Asn84, Asn248, Asn292, Asn312, Asn368, Asn407, Asn428, Asn487, and Asn527. A helical transmembrane segment spans residues 567-587 (IAVALLAALGFLSTLAILVIF). Residues 588 to 602 (WRHFQTPIVRSAGGP) lie on the Cytoplasmic side of the membrane. A helical membrane pass occupies residues 603–623 (MCFLMLTLLLVAYMVVPVYVG). Over 624–635 (PPKVSTCLCRQA) the chain is Extracellular. The helical transmembrane segment at 636 to 656 (LFPLCFTICISCIAVRSFQIV) threads the bilayer. At 657 to 681 (CAFKMASRFPRAYSYWVRYQGPYVS) the chain is on the cytoplasmic side. The chain crosses the membrane as a helical span at residues 682–702 (MAFITVLKMVIVVIGMLATGL). Over 703–727 (SPTTRTDPDDPKITIVSCNPNYRNS) the chain is Extracellular. A helical transmembrane segment spans residues 728 to 748 (LLFNTSLDLLLSVVGFSFAYM). Residues 749–760 (GKELPTNYNEAK) lie on the Cytoplasmic side of the membrane. The chain crosses the membrane as a helical span at residues 761–781 (FITLSMTFYFTSSVSLCTFMS). Residues 782 to 784 (AYS) are Extracellular-facing. A helical membrane pass occupies residues 785–805 (GVLVTIVDLLVTVLNLLAISL). Residues 806 to 839 (GYFGPKCYMILFYPERNTSAYFNSMIQGYTMRRD) are Cytoplasmic-facing.

The protein belongs to the G-protein coupled receptor 3 family. TAS1R subfamily. In terms of assembly, forms heterodimers with TAS1R3.

It is found in the cell membrane. Functionally, putative taste receptor. TAS1R2/TAS1R3 recognizes diverse natural and synthetic sweeteners. The polypeptide is Taste receptor type 1 member 2 (TAS1R2) (Pan troglodytes (Chimpanzee)).